We begin with the raw amino-acid sequence, 329 residues long: Phosphate acyltransferase (329 aa).

Belongs to the PlsX family. Homodimer. Probably interacts with PlsY.

The protein localises to the cytoplasm. It catalyses the reaction a fatty acyl-[ACP] + phosphate = an acyl phosphate + holo-[ACP]. The protein operates within lipid metabolism; phospholipid metabolism. Catalyzes the reversible formation of acyl-phosphate (acyl-PO(4)) from acyl-[acyl-carrier-protein] (acyl-ACP). This enzyme utilizes acyl-ACP as fatty acyl donor, but not acyl-CoA. The protein is Phosphate acyltransferase of Sulfurovum sp. (strain NBC37-1).